The following is a 520-amino-acid chain: DNA mismatch repair protein MutL (520 aa).

Belongs to the DNA mismatch repair MutL/HexB family.

Functionally, this protein is involved in the repair of mismatches in DNA. It is required for dam-dependent methyl-directed DNA mismatch repair. May act as a 'molecular matchmaker', a protein that promotes the formation of a stable complex between two or more DNA-binding proteins in an ATP-dependent manner without itself being part of a final effector complex. This chain is DNA mismatch repair protein MutL, found in Persephonella marina (strain DSM 14350 / EX-H1).